A 344-amino-acid polypeptide reads, in one-letter code: Ferrochelatase (344 aa).

Positions 214 and 295 each coordinate Fe cation.

Belongs to the ferrochelatase family.

The protein localises to the cytoplasm. It carries out the reaction heme b + 2 H(+) = protoporphyrin IX + Fe(2+). It functions in the pathway porphyrin-containing compound metabolism; protoheme biosynthesis; protoheme from protoporphyrin-IX: step 1/1. In terms of biological role, catalyzes the ferrous insertion into protoporphyrin IX. This chain is Ferrochelatase, found in Rhizobium etli (strain CIAT 652).